The sequence spans 809 residues: H(+)/Cl(-) exchange transporter 7 (809 aa).

Topologically, residues 1–130 (MANVSKKVSW…TAFRTVEIKR (130 aa)) are cytoplasmic. Phosphoserine is present on residues Ser9 and Ser64. The next 2 helical transmembrane spans lie at 131-163 (WVIC…YRLV) and 178-201 (FSLL…VAFI). Positions 207-211 (GSGIP) match the Selectivity filter part_1 motif. Position 208 (Ser208) interacts with chloride. An intramembrane region (helical) is located at residues 210–217 (IPQIKCFL). The next 2 helical transmembrane spans lie at 227–245 (RLKT…VVGG) and 251–268 (EGPM…ISQG). The short motif at 249–253 (GKEGP) is the Selectivity filter part_2 element. Intramembrane regions (helical) lie at residues 292–304 (FVSA…VSAA) and 308–316 (PVGGVLFSL). The next 5 helical transmembrane spans lie at 326-345 (FLTW…LNFV), 379-409 (IPIF…FRIR), 414-436 (PCLQ…FVLI), 491-511 (PMTL…TYGL), and 516-539 (GVFI…LSYI). Residues 516-520 (GVFIP) carry the Selectivity filter part_3 motif. Chloride is bound at residue Phe518. Positions 549–563 (GKYALMGAAAQLGGI) form an intramembrane region, helical. An intramembrane region (note=Loop between two helices) is located at residues 564-566 (VRM). Positions 567–578 (TLSLTVIMMEAT) form an intramembrane region, helical. Residues 579–582 (SSVT) constitute an intramembrane region (note=Loop between two helices). The chain crosses the membrane as a helical span at residues 583-601 (YGFPIMLVLMTAKIVGDVF). Residues 602–809 (IEGLYDMHIQ…GLEELSLAQT (208 aa)) are Cytoplasmic-facing. Tyr606 is a binding site for chloride. 2 consecutive CBS domains span residues 635-699 (MSTP…VFVE) and 745-803 (MNPS…GLEE). Residues 662 to 664 (HNG) and 787 to 790 (TRKD) contribute to the ATP site. Ser805 bears the Phosphoserine mark.

The protein belongs to the chloride channel (TC 2.A.49) family. ClC-7/CLCN7 subfamily. Chloride channel 7 are heteromers of alpha (CLCN7) and beta (OSTM1) subunits.

The protein resides in the lysosome membrane. It carries out the reaction 2 chloride(in) + H(+)(out) = 2 chloride(out) + H(+)(in). Functionally, slowly voltage-gated channel mediating the exchange of chloride ions against protons. Functions as antiporter and contributes to the acidification of the lysosome lumen and may be involved in maintaining lysosomal pH. The CLC channel family contains both chloride channels and proton-coupled anion transporters that exchange chloride or another anion for protons. The presence of conserved gating glutamate residues is typical for family members that function as antiporters. The polypeptide is H(+)/Cl(-) exchange transporter 7 (CLCN7) (Bos taurus (Bovine)).